A 228-amino-acid polypeptide reads, in one-letter code: Ion-translocating oxidoreductase complex subunit E (228 aa).

5 consecutive transmembrane segments (helical) span residues 24 to 44 (LLGLCPLLAISGTVVNALGLG), 73 to 93 (VFVLIIASVVTAIELAMNAFF), 95 to 115 (ELYLILGIFIPLIVTNCAIIG), 130 to 150 (LADGLAMGLGFTCVLVALGAL), and 184 to 204 (GFLLALLPPGAFIALGLLIAL).

The protein belongs to the NqrDE/RnfAE family. In terms of assembly, the complex is composed of six subunits: RnfA, RnfB, RnfC, RnfD, RnfE and RnfG.

Its subcellular location is the cell inner membrane. Part of a membrane-bound complex that couples electron transfer with translocation of ions across the membrane. This Thioalkalivibrio sulfidiphilus (strain HL-EbGR7) protein is Ion-translocating oxidoreductase complex subunit E.